The chain runs to 102 residues: Large ribosomal subunit protein bL21 (102 aa).

This sequence belongs to the bacterial ribosomal protein bL21 family. Part of the 50S ribosomal subunit. Contacts protein L20.

This protein binds to 23S rRNA in the presence of protein L20. The polypeptide is Large ribosomal subunit protein bL21 (Bifidobacterium animalis subsp. lactis (strain AD011)).